The chain runs to 94 residues: Dynein light chain, cytoplasmic (94 aa).

It belongs to the dynein light chain family. In terms of assembly, homodimer. Cytoplasmic dynein consists of two catalytic heavy chains (HCs) and a number of non-catalytic subunits which present intermediate chains (ICs), light intermediate chains (LICs) and light chains (LCs). Component of the nuclear pore complex (NPC). The nuclear pore complex constitutes the exclusive means of nucleocytoplasmic transport. NPCs allow the passive diffusion of ions and small molecules and the active, nuclear transport receptor-mediated bidirectional transport of macromolecules such as proteins, RNAs, ribonucleoparticles (RNPs), and ribosomal subunits across the nuclear envelope. Due to its 8-fold rotational symmetry, all subunits are present with 8 copies or multiples thereof.

Its subcellular location is the cytoplasm. It localises to the cytoskeleton. The protein localises to the nucleus. It is found in the nuclear pore complex. Acts as one of several non-catalytic accessory components of the cytoplasmic dynein complex that are thought to be involved in linking dynein to cargos and to adapter proteins that regulate dynein function. Cytoplasmic dynein 1 acts as a motor for the intracellular retrograde motility of vesicles and organelles along microtubules. May play a role in changing or maintaining the spatial distribution of cytoskeletal structures. Also a component of the nuclear pore complex. The chain is Dynein light chain, cytoplasmic (nudG) from Emericella nidulans (strain FGSC A4 / ATCC 38163 / CBS 112.46 / NRRL 194 / M139) (Aspergillus nidulans).